Consider the following 332-residue polypeptide: Ketol-acid reductoisomerase (NADP(+)) (332 aa).

One can recognise a KARI N-terminal Rossmann domain in the interval 2 to 182 (AKVYIDKDAS…GATRAGVIET (181 aa)). NADP(+)-binding positions include 25-28 (YGSQ), Ser53, and 83-86 (DMVQ). His108 is an active-site residue. Gly134 contributes to the NADP(+) binding site. The KARI C-terminal knotted domain occupies 183–328 (TFKEETETDL…RQIREISLRG (146 aa)). Mg(2+)-binding residues include Asp191, Glu195, Glu227, and Glu231. Ser252 is a binding site for substrate.

The protein belongs to the ketol-acid reductoisomerase family. It depends on Mg(2+) as a cofactor.

The catalysed reaction is (2R)-2,3-dihydroxy-3-methylbutanoate + NADP(+) = (2S)-2-acetolactate + NADPH + H(+). The enzyme catalyses (2R,3R)-2,3-dihydroxy-3-methylpentanoate + NADP(+) = (S)-2-ethyl-2-hydroxy-3-oxobutanoate + NADPH + H(+). The protein operates within amino-acid biosynthesis; L-isoleucine biosynthesis; L-isoleucine from 2-oxobutanoate: step 2/4. It participates in amino-acid biosynthesis; L-valine biosynthesis; L-valine from pyruvate: step 2/4. Its function is as follows. Involved in the biosynthesis of branched-chain amino acids (BCAA). Catalyzes an alkyl-migration followed by a ketol-acid reduction of (S)-2-acetolactate (S2AL) to yield (R)-2,3-dihydroxy-isovalerate. In the isomerase reaction, S2AL is rearranged via a Mg-dependent methyl migration to produce 3-hydroxy-3-methyl-2-ketobutyrate (HMKB). In the reductase reaction, this 2-ketoacid undergoes a metal-dependent reduction by NADPH to yield (R)-2,3-dihydroxy-isovalerate. The protein is Ketol-acid reductoisomerase (NADP(+)) of Sulfurisphaera tokodaii (strain DSM 16993 / JCM 10545 / NBRC 100140 / 7) (Sulfolobus tokodaii).